Reading from the N-terminus, the 448-residue chain is CCA-adding enzyme (448 aa).

ATP contacts are provided by Ser-52 and Lys-55. The CTP site is built by Ser-52 and Lys-55. Residues Asp-64, Asp-66, and Asp-118 each coordinate Mg(2+). Positions 141, 160, and 169 each coordinate ATP. Residues His-141, Lys-160, and Tyr-169 each coordinate CTP.

This sequence belongs to the tRNA nucleotidyltransferase/poly(A) polymerase family. Archaeal CCA-adding enzyme subfamily. Homodimer. Requires Mg(2+) as cofactor.

It catalyses the reaction a tRNA precursor + 2 CTP + ATP = a tRNA with a 3' CCA end + 3 diphosphate. It carries out the reaction a tRNA with a 3' CCA end + 2 CTP + ATP = a tRNA with a 3' CCACCA end + 3 diphosphate. Catalyzes the addition and repair of the essential 3'-terminal CCA sequence in tRNAs without using a nucleic acid template. Adds these three nucleotides in the order of C, C, and A to the tRNA nucleotide-73, using CTP and ATP as substrates and producing inorganic pyrophosphate. tRNA 3'-terminal CCA addition is required both for tRNA processing and repair. Also involved in tRNA surveillance by mediating tandem CCA addition to generate a CCACCA at the 3' terminus of unstable tRNAs. While stable tRNAs receive only 3'-terminal CCA, unstable tRNAs are marked with CCACCA and rapidly degraded. The polypeptide is CCA-adding enzyme (Pyrococcus abyssi (strain GE5 / Orsay)).